The following is a 543-amino-acid chain: CTP synthase (543 aa).

The tract at residues 1–265 (MTNYIFVTGG…DELVVQRFGL (265 aa)) is amidoligase domain. Serine 13 lines the CTP pocket. Serine 13 serves as a coordination point for UTP. Residues 14 to 19 (SLGKGI) and aspartate 71 each bind ATP. Residues aspartate 71 and glutamate 139 each coordinate Mg(2+). Residues 146–148 (DIE), 186–191 (KTKPTQ), and lysine 222 each bind CTP. UTP contacts are provided by residues 186–191 (KTKPTQ) and lysine 222. Position 238–240 (238–240 (KDA)) interacts with ATP. Residues 290 to 541 (TIGMVGKYVE…VKAAGEYYKN (252 aa)) enclose the Glutamine amidotransferase type-1 domain. Residue glycine 351 participates in L-glutamine binding. The active-site Nucleophile; for glutamine hydrolysis is cysteine 378. L-glutamine-binding positions include 379 to 382 (LGMQ), glutamate 402, and arginine 469. Active-site residues include histidine 514 and glutamate 516.

Belongs to the CTP synthase family. In terms of assembly, homotetramer.

The catalysed reaction is UTP + L-glutamine + ATP + H2O = CTP + L-glutamate + ADP + phosphate + 2 H(+). It catalyses the reaction L-glutamine + H2O = L-glutamate + NH4(+). It carries out the reaction UTP + NH4(+) + ATP = CTP + ADP + phosphate + 2 H(+). The protein operates within pyrimidine metabolism; CTP biosynthesis via de novo pathway; CTP from UDP: step 2/2. With respect to regulation, allosterically activated by GTP, when glutamine is the substrate; GTP has no effect on the reaction when ammonia is the substrate. The allosteric effector GTP functions by stabilizing the protein conformation that binds the tetrahedral intermediate(s) formed during glutamine hydrolysis. Inhibited by the product CTP, via allosteric rather than competitive inhibition. Its function is as follows. Catalyzes the ATP-dependent amination of UTP to CTP with either L-glutamine or ammonia as the source of nitrogen. Regulates intracellular CTP levels through interactions with the four ribonucleotide triphosphates. The sequence is that of CTP synthase from Pseudoalteromonas atlantica (strain T6c / ATCC BAA-1087).